Consider the following 264-residue polypeptide: MKKISGVIMDWAGTAVDYGCFAPLNAFLKVFSEEKGIDITYRQAREPMGLLKIDHIKAILSMPEVNEKFRALYKRDWNKRDVDEMYTSFEKHLFASLKDFTTPIPGVLETMAMLREQGIKIGSTTGYTAKMMEIVRPGAEAKGYRVDNLVTPNEVPAGRPAPYMIYKNMIDLAIPSVDQVVKVGDTIADIKEGVNAKVWSVGIVTGSNEMGVSEEEYNSRPAEEWESLKKEVRERMLAAGAHFVLDTIAELPACIEKINNRDQA.

Asp10 functions as the Nucleophile in the catalytic mechanism. Residues Asp10 and Ala12 each contribute to the Mg(2+) site. Catalysis depends on Lys52, which acts as the Schiff-base intermediate with substrate. Asp185 lines the Mg(2+) pocket.

The protein belongs to the HAD-like hydrolase superfamily. PhnX family. In terms of assembly, homodimer. Requires Mg(2+) as cofactor.

The enzyme catalyses phosphonoacetaldehyde + H2O = acetaldehyde + phosphate + H(+). In terms of biological role, involved in phosphonate degradation. The chain is Phosphonoacetaldehyde hydrolase from Parabacteroides distasonis (strain ATCC 8503 / DSM 20701 / CIP 104284 / JCM 5825 / NCTC 11152).